The chain runs to 525 residues: Bifunctional enzyme NanE/NanK (525 aa).

Positions M1 to S241 are manNAc-6-P epimerase. Positions S242–S525 are manNAc kinase. Residues A246–K253 and G372–L379 each bind ATP.

This sequence in the N-terminal section; belongs to the NanE family. In the C-terminal section; belongs to the ROK (NagC/XylR) family. NanK subfamily.

The catalysed reaction is an N-acyl-D-glucosamine 6-phosphate = an N-acyl-D-mannosamine 6-phosphate. The enzyme catalyses an N-acyl-D-mannosamine + ATP = an N-acyl-D-mannosamine 6-phosphate + ADP + H(+). Its pathway is amino-sugar metabolism; N-acetylneuraminate degradation; D-fructose 6-phosphate from N-acetylneuraminate: step 2/5. It functions in the pathway amino-sugar metabolism; N-acetylneuraminate degradation; D-fructose 6-phosphate from N-acetylneuraminate: step 3/5. In terms of biological role, converts N-acetylmannosamine-6-phosphate (ManNAc-6-P) to N-acetylglucosamine-6-phosphate (GlcNAc-6-P). Its function is as follows. Catalyzes the phosphorylation of N-acetylmannosamine (ManNAc) to ManNAc-6-P. The chain is Bifunctional enzyme NanE/NanK (nanEK) from Brucella suis biovar 1 (strain 1330).